The primary structure comprises 110 residues: Thioredoxin (110 aa).

In terms of domain architecture, Thioredoxin spans 3–108; the sequence is KPIEVHDSDF…YREIFDKVLA (106 aa). C32 and C35 are oxidised to a cystine. Residue K105 is modified to N6,N6-dimethyllysine; alternate. K105 carries the post-translational modification N6-methyllysine; alternate.

In terms of biological role, participates in various redox reactions through the reversible oxidation of its active center dithiol to a disulfide and catalyzes dithiol-disulfide exchange reactions. The sequence is that of Thioredoxin (trxA) from Chloroflexus aurantiacus (strain ATCC 29366 / DSM 635 / J-10-fl).